A 118-amino-acid polypeptide reads, in one-letter code: Putative pterin-4-alpha-carbinolamine dehydratase (118 aa).

The protein belongs to the pterin-4-alpha-carbinolamine dehydratase family.

The catalysed reaction is (4aS,6R)-4a-hydroxy-L-erythro-5,6,7,8-tetrahydrobiopterin = (6R)-L-erythro-6,7-dihydrobiopterin + H2O. The sequence is that of Putative pterin-4-alpha-carbinolamine dehydratase from Xanthomonas euvesicatoria pv. vesicatoria (strain 85-10) (Xanthomonas campestris pv. vesicatoria).